The following is a 155-amino-acid chain: Protein Smg homolog (155 aa).

Belongs to the Smg family.

This Azoarcus sp. (strain BH72) protein is Protein Smg homolog.